We begin with the raw amino-acid sequence, 92 residues long: Small ribosomal subunit protein uS19 (92 aa).

Belongs to the universal ribosomal protein uS19 family.

Its function is as follows. Protein S19 forms a complex with S13 that binds strongly to the 16S ribosomal RNA. The chain is Small ribosomal subunit protein uS19 from Brucella anthropi (strain ATCC 49188 / DSM 6882 / CCUG 24695 / JCM 21032 / LMG 3331 / NBRC 15819 / NCTC 12168 / Alc 37) (Ochrobactrum anthropi).